Consider the following 266-residue polypeptide: 3-methyl-2-oxobutanoate hydroxymethyltransferase (266 aa).

Asp-45 and Asp-84 together coordinate Mg(2+). Residues 45–46, Asp-84, and Lys-112 each bind 3-methyl-2-oxobutanoate; that span reads DS. Residue Glu-114 coordinates Mg(2+). The active-site Proton acceptor is Glu-181.

It belongs to the PanB family. In terms of assembly, homodecamer; pentamer of dimers. It depends on Mg(2+) as a cofactor.

Its subcellular location is the cytoplasm. The enzyme catalyses 3-methyl-2-oxobutanoate + (6R)-5,10-methylene-5,6,7,8-tetrahydrofolate + H2O = 2-dehydropantoate + (6S)-5,6,7,8-tetrahydrofolate. It functions in the pathway cofactor biosynthesis; (R)-pantothenate biosynthesis; (R)-pantoate from 3-methyl-2-oxobutanoate: step 1/2. Its function is as follows. Catalyzes the reversible reaction in which hydroxymethyl group from 5,10-methylenetetrahydrofolate is transferred onto alpha-ketoisovalerate to form ketopantoate. The sequence is that of 3-methyl-2-oxobutanoate hydroxymethyltransferase from Pseudomonas savastanoi pv. phaseolicola (strain 1448A / Race 6) (Pseudomonas syringae pv. phaseolicola (strain 1448A / Race 6)).